The chain runs to 513 residues: MYRKLAVISAFLATARAQSACTLQSETHPPLTWQKCSSGGTCTQQTGSVVIDANWRWTHATNSSTNCYDGNTWSSTLCPDNETCAKNCCLDGAAYASTYGVTTSGNSLSIGFVTQSAQKNVGARLYLMASDTTYQEFTLLGNEFSFDVDVSQLPCGLNGALYFVSMDADGGVSKYPTNTAGAKYGTGYCDSQCPRDLKFINGQANVEGWEPSSNNANTGIGGHGSCCSEMDIWEANSISEALTPHPCTTVGQEICEGDGCGGTYSDNRYGGTCDPDGCDWNPYRLGNTSFYGPGSSFTLDTTKKLTVVTQFETSGAINRYYVQNGVTFQQPNAELGSYSGNELNDDYCTAEEAEFGGSSFSDKGGLTQFKKATSGGMVLVMSLWDDYYANMLWLDSTYPTNETSSTPGAVRGSCSTSSGVPAQVESQSPNAKVTFSNIKFGPIGSTGNPSGGNPPGGNRGTTTTRRPATTTGSSPGPTQSHYGQCGGIGYSGPTVCASGTTCQVLNPYYSQCL.

The first 17 residues, 1–17 (MYRKLAVISAFLATARA), serve as a signal peptide directing secretion. Position 18 is a pyrrolidone carboxylic acid (Q18). The tract at residues 18–453 (QSACTLQSET…GSTGNPSGGN (436 aa)) is catalytic. Intrachain disulfides connect C21/C89, C36/C42, C67/C88, C78/C84, C155/C414, C189/C227, C193/C226, C247/C273, C255/C260, and C278/C348. N-linked (GlcNAc) asparagine glycosylation occurs at N62. The Nucleophile role is filled by E229. Residue E234 is the Proton donor/acceptor of the active site. N287 and N401 each carry an N-linked (GlcNAc) asparagine glycan. Polar residues predominate over residues 401–437 (NETSSTPGAVRGSCSTSSGVPAQVESQSPNAKVTFSN). The interval 401-480 (NETSSTPGAV…TGSSPGPTQS (80 aa)) is disordered. A compositionally biased stretch (gly residues) spans 449-459 (PSGGNPPGGNR). A linker region spans residues 454-477 (PPGGNRGTTTTRRPATTTGSSPGP). Positions 460-478 (GTTTTRRPATTTGSSPGPT) are enriched in low complexity. Residue T461 is glycosylated (O-linked (Man) threonine). Residues T462, T463, and T464 are each glycosylated (O-linked (Man...) threonine). A glycan (O-linked (Man) threonine) is linked at T469. O-linked (Man...) threonine glycans are attached at residues T470 and T471. Residues S473 and S474 are each glycosylated (O-linked (Man) serine). The 37-residue stretch at 477 to 513 (PTQSHYGQCGGIGYSGPTVCASGTTCQVLNPYYSQCL) folds into the CBM1 domain. T478 is a glycosylation site (O-linked (Man) threonine). O-linked (Man) serine glycans are attached at residues S480 and S491. Intrachain disulfides connect C485–C502 and C496–C512.

This sequence belongs to the glycosyl hydrolase 7 (cellulase C) family. N-glycosylated. The catalytic core domain comprises three N-linked glycans which each consist of a single N-acetylglucosamine residue. Post-translationally, O-glycosylated. Within the linker domain, all 8 threonines are variably glycosylated with between at least one, and up to three, mannose residues per site. All serines in this domain are at least partially glycosylated with a single mannose residue. O-glycosylation of the cellulase linker provides protection from proteolysis. Linker glycans also contribute to binding affinity of cellobiohydrolases to cellulose.

The protein resides in the secreted. It catalyses the reaction Hydrolysis of (1-&gt;4)-beta-D-glucosidic linkages in cellulose and cellotetraose, releasing cellobiose from the non-reducing ends of the chains.. Its function is as follows. Exocellobiohydrolases (CBH) that catalyzes the hydrolysis of 1,4-beta-D-glucosidic bonds in cellulose to release the disaccharide cellobiose. The degradation of cellulose involves an interplay between different cellulolytic enzymes. Hydrolysis starts with endoglucanases (EGs), which cut internal beta-1,4-glucosidic bonds in cellulose to reduce the polymerization degree of the substrate and create new chain ends for exocellobiohydrolases (CBHs). The CBHs release the disaccharide cellobiose from the non-reducing end of the cellulose polymer chain. Finally, beta-1,4-glucosidases hydrolyze the cellobiose and other short cello-oligosaccharides into glucose units. This Hypocrea jecorina (Trichoderma reesei) protein is Exoglucanase 1 (cbh1).